The sequence spans 318 residues: Fe(3+) dicitrate transport system permease protein FecD (318 aa).

At 1-2 (MK) the chain is on the cytoplasmic side. The chain crosses the membrane as a helical span at residues 3–23 (IALVIFITLALAGCALLSLHM). Topologically, residues 24–55 (GVIPVPWRALLTDWQAGHEHYYVLMEYRLPRL) are periplasmic. A helical membrane pass occupies residues 56–76 (LLALFVGAALAVAGVLIQGIV). Residues 77 to 105 (RNPLASPDILGVNHAASLASVGALLLMPS) are Cytoplasmic-facing. The chain crosses the membrane as a helical span at residues 106 to 126 (LPVMVLPLLAFAGGMAGLILL). Residues 127–137 (KMLAKTHQPMK) lie on the Periplasmic side of the membrane. The helical transmembrane segment at 138–158 (LALTGVALSACWASLTDYLML) threads the bilayer. Topologically, residues 159 to 179 (SRPQDVNNALLWLTGSLWGRD) are cytoplasmic. The helical transmembrane segment at 180 to 200 (WSFVKIAIPLMILFLPLSLSF) threads the bilayer. The Periplasmic portion of the chain corresponds to 201 to 225 (CRDLDLLALGDARATTLGVSVPHTR). The chain crosses the membrane as a helical span at residues 226 to 246 (FWALLLAVAMTSTGVAACGPI). Topologically, residues 247–269 (SFIGLVVPHMMRSITGGRHRRLL) are cytoplasmic. Residues 270 to 290 (PVSALTGALLLVVADLLARII) traverse the membrane as a helical segment. Residues 291–294 (HPPL) lie on the Periplasmic side of the membrane. The chain crosses the membrane as a helical span at residues 295-315 (ELPVGVLTAIIGAPWFVWLLV). Topologically, residues 316 to 318 (RMR) are cytoplasmic.

Belongs to the binding-protein-dependent transport system permease family. FecCD subfamily. As to quaternary structure, the complex is composed of two ATP-binding proteins (FecE), two transmembrane proteins (FecC and FecD) and a solute-binding protein (FecB). Interacts with FecB.

The protein localises to the cell inner membrane. Its function is as follows. Part of the ABC transporter complex FecBCDE involved in citrate-dependent Fe(3+) uptake. Probably responsible for the translocation of the substrate across the membrane. This Escherichia coli (strain K12) protein is Fe(3+) dicitrate transport system permease protein FecD.